The sequence spans 369 residues: UDP-N-acetylglucosamine--N-acetylmuramyl-(pentapeptide) pyrophosphoryl-undecaprenol N-acetylglucosamine transferase (369 aa).

UDP-N-acetyl-alpha-D-glucosamine contacts are provided by residues 10–12, Asn-124, Ser-195, Ile-252, and Gln-297; that span reads TGG.

The protein belongs to the glycosyltransferase 28 family. MurG subfamily.

It is found in the cell membrane. It catalyses the reaction Mur2Ac(oyl-L-Ala-gamma-D-Glu-L-Lys-D-Ala-D-Ala)-di-trans,octa-cis-undecaprenyl diphosphate + UDP-N-acetyl-alpha-D-glucosamine = beta-D-GlcNAc-(1-&gt;4)-Mur2Ac(oyl-L-Ala-gamma-D-Glu-L-Lys-D-Ala-D-Ala)-di-trans,octa-cis-undecaprenyl diphosphate + UDP + H(+). It functions in the pathway cell wall biogenesis; peptidoglycan biosynthesis. Cell wall formation. Catalyzes the transfer of a GlcNAc subunit on undecaprenyl-pyrophosphoryl-MurNAc-pentapeptide (lipid intermediate I) to form undecaprenyl-pyrophosphoryl-MurNAc-(pentapeptide)GlcNAc (lipid intermediate II). In Leuconostoc citreum (strain KM20), this protein is UDP-N-acetylglucosamine--N-acetylmuramyl-(pentapeptide) pyrophosphoryl-undecaprenol N-acetylglucosamine transferase.